The sequence spans 1315 residues: MLNRENKTAITRKGMVSNRLNKFSIRKYTVGTASILVGTTLIFGLGNQEAKAAESTNKELNEATTSASDNQSSDKVDMQQLNQEDNTKNDNQKEMVSSQGNETTSNGNKLIEKESVQSTTGNKVEVSTAKSDEQASPKSTNEDLNTKQTISNQEALQPDLQENKSVVNVQPTNEENKKVDAKTESTTLNVKSDAIKSNDETLVDNNSNSNNENNADIILPKSTAPKRLNTRMRIAAVQPSSTEAKNVNDLITSNTTLTVVDADKNNKIVPAQDYLSLKSQITVDDKVKSGDYFTIKYSDTVQVYGLNPEDIKNIGDIKDPNNGETIATAKHDTANNLITYTFTDYVDRFNSVQMGINYSIYMDADTIPVSKNDVEFNVTIGNTTTKTTANIQYPDYVVNEKNSIGSAFTETVSHVGNKENPGYYKQTIYVNPSENSLTNAKLKVQAYHSSYPNNIGQINKDVTDIKIYQVPKGYTLNKGYDVNTKELTDVTNQYLQKITYGDNNSAVIDFGNADSAYVVMVNTKFQYTNSESPTLVQMATLSSTGNKSVSTGNALGFTNNQSGGAGQEVYKIGNYVWEDTNKNGVQELGEKGVGNVTVTVFDNNTNTKVGEAVTKEDGSYLIPNLPNGDYRVEFSNLPKGYEVTPSKQGNNEELDSNGLSSVITVNGKDNLSADLGIYKPKYNLGDYVWEDTNKNGIQDQDEKGISGVTVTLKDENGNVLKTVTTDADGKYKFTDLDNGNYKVEFTTPEGYTPTTVTSGSDIEKDSNGLTTTGVINGADNMTLDSGFYKTPKYNLGNYVWEDTNKDGKQDSTEKGISGVTVTLKNENGEVLQTTKTDKDGKYQFTGLENGTYKVEFETPSGYTPTQVGSGTDEGIDSNGTSTTGVIKDKDNDTIDSGFYKPTYNLGDYVWEDTNKNGVQDKDEKGISGVTVTLKDENDKVLKTVTTDENGKYQFTDLNNGTYKVEFETPSGYTPTSVTSGNDTEKDSNGLTTTGVIKDADNMTLDSGFYKTPKYSLGDYVWYDSNKDGKQDSTEKGIKDVKVTLLNEKGEVIGTTKTDENGKYCFDNLDSGKYKVIFEKPAGLTQTGTNTTEDDKDADGGEVDVTITDHDDFTLDNGYYEEETSDSDSDSDSDSDSDRDSDSDSDSDSDSDSDSDSDSDSDSDSDSDRDSDSDSDSDSDSDSDSDSDSDSDSDSDSDSDSDSDSDSDSDSDSDSDSDSDSDSDSDSDSDSDSDSDSDSDSDSDSDSDSDSDSDSDAGKHTPVKPMSTTKDHHNKAKALPETGNENSGSNNATLFGGLFAALGSLLLFGRRKKQNK.

Positions 1–35 (MLNRENKTAITRKGMVSNRLNKFSIRKYTVGTASI) are cleaved as a signal peptide. The YSIRK-G/S signaling motif signature appears at 23–34 (FSIRKYTVGTAS). The segment at 36–568 (LVGTTLIFGL…NNQSGGAGQE (533 aa)) is ligand binding A region. The tract at residues 54–185 (ESTNKELNEA…NKKVDAKTES (132 aa)) is disordered. 2 stretches are compositionally biased toward polar residues: residues 62–71 (EATTSASDNQ) and 94–108 (EMVS…SNGN). A compositionally biased stretch (basic and acidic residues) spans 130-145 (KSDEQASPKSTNEDLN). Composition is skewed to polar residues over residues 146–155 (TKQTISNQEA) and 163–173 (NKSVVNVQPTN). Positions 174–183 (EENKKVDAKT) are enriched in basic and acidic residues. CNA-B domains follow at residues 569–680 (VYKI…IYKP), 681–791 (KYNL…YKTP), 792–901 (KYNL…FYKP), 902–1012 (TYNL…YKTP), and 1013–1123 (KYSL…EEET). Disordered stretches follow at residues 857 to 883 (ETPS…TSTT), 972 to 992 (YTPT…GLTT), and 1078 to 1291 (EKPA…SNNA). Polar residues-rich tracts occupy residues 860 to 869 (SGYTPTQVGS) and 972 to 981 (YTPTSVTSGN). Composition is skewed to acidic residues over residues 1091 to 1101 (TEDDKDADGGE), 1118 to 1134 (YYEE…DSDS), 1142 to 1164 (SDSD…DSDS), and 1172 to 1254 (SDSD…DSDS). Positions 1278-1282 (LPETG) match the LPXTG sorting signal motif. T1281 carries the pentaglycyl murein peptidoglycan amidated threonine modification. Positions 1282–1315 (GNENSGSNNATLFGGLFAALGSLLLFGRRKKQNK) are cleaved as a propeptide — removed by sortase.

Belongs to the serine-aspartate repeat-containing protein (SDr) family. As to quaternary structure, interacts with host DSG1; this interaction increases S.aureus adherence to keratinocytes. Anchored to the cell wall by sortase A.

It is found in the secreted. The protein localises to the cell wall. Cell surface-associated calcium-binding protein which plays an important role in adhesion and pathogenesis. Mediates interactions with components of the extracellular matrix such as host DSG1 to promote bacterial adhesion to host cells. Contributes to the resistance to killing by innate immune components such as neutrophils present in blood and thus attenuates bacterial clearance. The protein is Serine-aspartate repeat-containing protein D (sdrD) of Staphylococcus aureus (strain Newman).